Consider the following 358-residue polypeptide: Membrane-bound lytic murein transglycosylase C (358 aa).

A signal peptide spans 1-16 (MKKILALLVIAPLLVS). Cys-17 carries the N-palmitoyl cysteine lipid modification. The S-diacylglycerol cysteine moiety is linked to residue Cys-17.

The protein belongs to the transglycosylase Slt family.

The protein localises to the cell outer membrane. It carries out the reaction Exolytic cleavage of the (1-&gt;4)-beta-glycosidic linkage between N-acetylmuramic acid (MurNAc) and N-acetylglucosamine (GlcNAc) residues in peptidoglycan, from either the reducing or the non-reducing ends of the peptidoglycan chains, with concomitant formation of a 1,6-anhydrobond in the MurNAc residue.. Its function is as follows. Murein-degrading enzyme. May play a role in recycling of muropeptides during cell elongation and/or cell division. The sequence is that of Membrane-bound lytic murein transglycosylase C from Yersinia pseudotuberculosis serotype O:1b (strain IP 31758).